The sequence spans 1179 residues: DNA-directed RNA polymerase subunit beta' (1179 aa).

Zn(2+) contacts are provided by Cys-60, Cys-62, Cys-75, and Cys-78. Positions 450, 452, and 454 each coordinate Mg(2+). 4 residues coordinate Zn(2+): Cys-791, Cys-865, Cys-872, and Cys-875.

It belongs to the RNA polymerase beta' chain family. As to quaternary structure, the RNAP catalytic core consists of 2 alpha, 1 beta, 1 beta' and 1 omega subunit. When a sigma factor is associated with the core the holoenzyme is formed, which can initiate transcription. Mg(2+) serves as cofactor. The cofactor is Zn(2+).

The enzyme catalyses RNA(n) + a ribonucleoside 5'-triphosphate = RNA(n+1) + diphosphate. Its function is as follows. DNA-dependent RNA polymerase catalyzes the transcription of DNA into RNA using the four ribonucleoside triphosphates as substrates. In Alkaliphilus oremlandii (strain OhILAs) (Clostridium oremlandii (strain OhILAs)), this protein is DNA-directed RNA polymerase subunit beta'.